We begin with the raw amino-acid sequence, 666 residues long: ATP-dependent zinc metalloprotease FtsH (666 aa).

Residues 1–6 (MKSETG) lie on the Cytoplasmic side of the membrane. Residues 7 to 27 (YMGFVVVLVFMVLLALQLATL) traverse the membrane as a helical segment. Residues 28-116 (SAPATQIAYS…TRYRGADDDT (89 aa)) lie on the Periplasmic side of the membrane. A helical transmembrane segment spans residues 117–137 (WIGTLASWIVPIAVFALVWNL). The Cytoplasmic portion of the chain corresponds to 138 to 666 (MLRRPRGGLQ…ADNADHSVPQ (529 aa)). Position 210 to 217 (210 to 217 (GAPGTGKT)) interacts with ATP. His-432 provides a ligand contact to Zn(2+). Glu-433 is a catalytic residue. The Zn(2+) site is built by His-436 and Asp-509. The segment at 612-666 (NDEPTPEPGARDPGGDAAKRSGIGAAPAKPPAEVGSAELRDPARKADNADHSVPQ) is disordered. 2 stretches are compositionally biased toward basic and acidic residues: residues 620 to 630 (GARDPGGDAAK) and 649 to 666 (ELRDPARKADNADHSVPQ).

The protein in the central section; belongs to the AAA ATPase family. This sequence in the C-terminal section; belongs to the peptidase M41 family. As to quaternary structure, homohexamer. Zn(2+) serves as cofactor.

The protein localises to the cell inner membrane. Its function is as follows. Acts as a processive, ATP-dependent zinc metallopeptidase for both cytoplasmic and membrane proteins. Plays a role in the quality control of integral membrane proteins. The chain is ATP-dependent zinc metalloprotease FtsH from Burkholderia pseudomallei (strain 1710b).